A 198-amino-acid chain; its full sequence is FMN-dependent NADH:quinone oxidoreductase (198 aa).

FMN-binding positions include Ser-10, 16–18, 94–97, and 138–141; these read SQS, MYNF, and TRGG.

Belongs to the azoreductase type 1 family. Homodimer. It depends on FMN as a cofactor.

The enzyme catalyses 2 a quinone + NADH + H(+) = 2 a 1,4-benzosemiquinone + NAD(+). It catalyses the reaction N,N-dimethyl-1,4-phenylenediamine + anthranilate + 2 NAD(+) = 2-(4-dimethylaminophenyl)diazenylbenzoate + 2 NADH + 2 H(+). Its function is as follows. Quinone reductase that provides resistance to thiol-specific stress caused by electrophilic quinones. In terms of biological role, also exhibits azoreductase activity. Catalyzes the reductive cleavage of the azo bond in aromatic azo compounds to the corresponding amines. This Shewanella sp. (strain MR-4) protein is FMN-dependent NADH:quinone oxidoreductase.